The chain runs to 280 residues: Retinoschisin (280 aa).

A signal peptide spans 1–23 (MHLPREAFLLALAGAFIFPSSQQ). The region spanning 119–275 (CPYHRPLGFE…IALRLELLLC (157 aa)) is the F5/8 type C domain. 2 disulfide bridges follow: Cys-119–Cys-275 and Cys-166–Cys-198.

As to quaternary structure, homooctamer of 4 homodimers; disulfide-linked. The homooctamer has a flat, cogwheel structure with a diameter of about 14 nm. Two stacked octamers can assemble to form a hexadecamer.

The protein localises to the secreted. Its subcellular location is the cell membrane. Binds negatively charged membrane lipids, such as phosphatidylserine and phosphoinositides. May play a role in cell-cell adhesion processes in the retina, via homomeric interaction between octamers present on the surface of two neighboring cells. Required for normal structure and function of the retina. This Takifugu rubripes (Japanese pufferfish) protein is Retinoschisin (xlrs1).